The primary structure comprises 121 residues: ORF8 protein (121 aa).

The first 15 residues, 1–15 (MKFLVFLGIITTVAA), serve as a signal peptide directing secretion. In terms of domain architecture, SARS ORF8 Ig-like spans 19–121 (ECSLQSCTQH…HDVRVVLDFI (103 aa)). 3 disulfides stabilise this stretch: Cys25/Cys90, Cys37/Cys102, and Cys61/Cys83. An N-linked (GlcNAc...) (complex) asparagine; by host glycan is attached at Asn78.

In terms of assembly, homodimer. Interacts with host IL17RA. Interacts with host IL17RC. Interacts with host MHC-I. Glycosylated by the host when secreted via the conventional pathway. The glycosylated form cannot bind IL17A and would not participate in the cytokine storm.

The protein resides in the secreted. Its function is as follows. Plays a role in modulating the host immune response. May act as a secreted virokine by mimicking interleukin-17A (IL17A), and thereby binding to the IL17RA receptor, leading to activation of the IL17 pathway and increased secretion of pro-inflammatory factors. Contributes to the cytokine storm during SARS-CoV-2 infection when secreted by unconventional pathway. May act by down-regulating major histocompability complex class I (MHC-I) at cell surface. May inhibit expression of some members of the IFN-stimulated gene (ISG) family including hosts IGF2BP1/ZBP1, MX1 and MX2, and DHX58. This is ORF8 protein from Severe acute respiratory syndrome coronavirus 2 (2019-nCoV).